A 360-amino-acid chain; its full sequence is Membrane-bound lytic murein transglycosylase C (360 aa).

Residues 1–16 form the signal peptide; it reads MKKLLALAVIAPLLIS. The N-palmitoyl cysteine moiety is linked to residue Cys17. Cys17 carries S-diacylglycerol cysteine lipidation.

Belongs to the transglycosylase Slt family.

The protein localises to the cell outer membrane. The enzyme catalyses Exolytic cleavage of the (1-&gt;4)-beta-glycosidic linkage between N-acetylmuramic acid (MurNAc) and N-acetylglucosamine (GlcNAc) residues in peptidoglycan, from either the reducing or the non-reducing ends of the peptidoglycan chains, with concomitant formation of a 1,6-anhydrobond in the MurNAc residue.. Murein-degrading enzyme. May play a role in recycling of muropeptides during cell elongation and/or cell division. The protein is Membrane-bound lytic murein transglycosylase C of Salmonella arizonae (strain ATCC BAA-731 / CDC346-86 / RSK2980).